A 102-amino-acid polypeptide reads, in one-letter code: Salivary thrombin inhibitor anophelin (102 aa).

The first 21 residues, 1–21, serve as a signal peptide directing secretion; that stretch reads MATKLIVIAFLCAALIAVVQS. Residues 25-102 are disordered; that stretch reads YAQGEEPTYD…SDSSSESTEH (78 aa). Residues 59 to 69 are compositionally biased toward polar residues; sequence SQLTEYANTAQ. Residues 70–73 form a blocks active site cleft of host thrombin in a reverse direction compared to substrates region; that stretch reads DPGR. Residues 80–90 show a composition bias toward polar residues; sequence QANSNNGDQLP. The span at 91–102 shows a compositional bias: low complexity; that stretch reads SQSDSSSESTEH.

It belongs to the anophelin family. As to quaternary structure, interacts with human F2 (thrombin); the interaction results in thrombin inhibition.

The protein resides in the secreted. Salivary protein with anticoagulant activity that inhibits host thrombin (F2). This is Salivary thrombin inhibitor anophelin from Anopheles funestus (African malaria mosquito).